Here is a 538-residue protein sequence, read N- to C-terminus: Putative cysteine ligase BshC (538 aa).

The stretch at Ile-248–Leu-268 forms a coiled coil.

Belongs to the BshC family.

In terms of biological role, involved in bacillithiol (BSH) biosynthesis. May catalyze the last step of the pathway, the addition of cysteine to glucosamine malate (GlcN-Mal) to generate BSH. The protein is Putative cysteine ligase BshC of Bacillus cereus (strain B4264).